Consider the following 366-residue polypeptide: MISSFHRPTVARVNLQAIKENVASVQKHIPLGVKTYAVVKADAYGHGAVQVSKALLPQVDGYCVSNLDEALQLRQAGIDKEILILGVLLPNELKLAITRQVTVTVASLEWLAMAKQEWPDLKGLKVHIKIDSGMGRIGLRSVTEVDNLIAGLKSMGADVEGIFTHFATADEADDTKFNQQLQFFKKLIAGLEDKPRLVHASNSATSIWHSDTIFNAVRLGIVSYGLNPSGSDLSLPFPLQEALSLESSLVHVKMISAGDTVGYGATYTAKKSEYVGTVPIGYADGWTRNMQGFSVLVDGQFCEIIGRVSMDQLTIRLSKAYPLGTKVTLIGSNQQKNISTTDIANYRNTINYEVLCLLSDRIPRIY.

Lys-40 (proton acceptor; specific for D-alanine) is an active-site residue. Lys-40 is subject to N6-(pyridoxal phosphate)lysine. A substrate-binding site is contributed by Arg-136. The Proton acceptor; specific for L-alanine role is filled by Tyr-263. A substrate-binding site is contributed by Met-310.

This sequence belongs to the alanine racemase family. Requires pyridoxal 5'-phosphate as cofactor.

The enzyme catalyses L-alanine = D-alanine. The protein operates within amino-acid biosynthesis; D-alanine biosynthesis; D-alanine from L-alanine: step 1/1. Functionally, catalyzes the interconversion of L-alanine and D-alanine. May also act on other amino acids. This Streptococcus pyogenes serotype M6 (strain ATCC BAA-946 / MGAS10394) protein is Alanine racemase (alr).